Reading from the N-terminus, the 465-residue chain is Ribulose bisphosphate carboxylase large chain (465 aa).

An N6,N6,N6-trimethyllysine modification is found at Lys-4. Substrate contacts are provided by Asn-113 and Thr-163. Lys-165 serves as the catalytic Proton acceptor. Lys-167 serves as a coordination point for substrate. Lys-191, Asp-193, and Glu-194 together coordinate Mg(2+). The residue at position 191 (Lys-191) is an N6-carboxylysine. His-284 (proton acceptor) is an active-site residue. Substrate is bound by residues Arg-285, His-317, and Ser-369.

It belongs to the RuBisCO large chain family. Type I subfamily. Heterohexadecamer of 8 large chains and 8 small chains; disulfide-linked. The disulfide link is formed within the large subunit homodimers. Mg(2+) is required as a cofactor. Post-translationally, the disulfide bond which can form in the large chain dimeric partners within the hexadecamer appears to be associated with oxidative stress and protein turnover.

Its subcellular location is the plastid. It localises to the chloroplast. It catalyses the reaction 2 (2R)-3-phosphoglycerate + 2 H(+) = D-ribulose 1,5-bisphosphate + CO2 + H2O. The enzyme catalyses D-ribulose 1,5-bisphosphate + O2 = 2-phosphoglycolate + (2R)-3-phosphoglycerate + 2 H(+). Its function is as follows. RuBisCO catalyzes two reactions: the carboxylation of D-ribulose 1,5-bisphosphate, the primary event in carbon dioxide fixation, as well as the oxidative fragmentation of the pentose substrate in the photorespiration process. Both reactions occur simultaneously and in competition at the same active site. This chain is Ribulose bisphosphate carboxylase large chain, found in Eucommia ulmoides (Hardy rubber tree).